The primary structure comprises 131 residues: C-type natriuretic peptide (131 aa).

Positions 1-20 (MMCKALVFAVLLLAVPLERA) are cleaved as a signal peptide. The propeptide occupies 21–109 (DSRALRTPVD…KRALPDRAKR (89 aa)). An intrachain disulfide couples Cys-115 to Cys-131.

Belongs to the natriuretic peptide family. As to expression, highly expressed in brain and liver, and moderately in gut, gills and heart. Expressed to a low level in atrium, ventricle and liver of fresh water eels.

The protein resides in the secreted. Functionally, hormone which plays a role in endochondral ossification through regulation of cartilaginous growth plate chondrocytes proliferation and differentiation. May also be vasoactive and natriuretic. May be important for freshwater adaptation. This Anguilla japonica (Japanese eel) protein is C-type natriuretic peptide (cnp).